The primary structure comprises 274 residues: Tryptophan synthase alpha chain (274 aa).

Residues glutamate 49 and aspartate 60 each act as proton acceptor in the active site.

The protein belongs to the TrpA family. As to quaternary structure, tetramer of two alpha and two beta chains.

It catalyses the reaction (1S,2R)-1-C-(indol-3-yl)glycerol 3-phosphate + L-serine = D-glyceraldehyde 3-phosphate + L-tryptophan + H2O. The protein operates within amino-acid biosynthesis; L-tryptophan biosynthesis; L-tryptophan from chorismate: step 5/5. In terms of biological role, the alpha subunit is responsible for the aldol cleavage of indoleglycerol phosphate to indole and glyceraldehyde 3-phosphate. This chain is Tryptophan synthase alpha chain, found in Zymomonas mobilis subsp. mobilis (strain ATCC 31821 / ZM4 / CP4).